A 221-amino-acid chain; its full sequence is Uracil-DNA glycosylase (221 aa).

Catalysis depends on Asp63, which acts as the Proton acceptor.

This sequence belongs to the uracil-DNA glycosylase (UDG) superfamily. UNG family.

It is found in the cytoplasm. The catalysed reaction is Hydrolyzes single-stranded DNA or mismatched double-stranded DNA and polynucleotides, releasing free uracil.. Its function is as follows. Excises uracil residues from the DNA which can arise as a result of misincorporation of dUMP residues by DNA polymerase or due to deamination of cytosine. This is Uracil-DNA glycosylase from Blochmanniella floridana.